A 117-amino-acid polypeptide reads, in one-letter code: MKLCAVIIASLLVCVAVASSSDNQKEFAQEKEMTREETQSLGEHEKDDEVTGSEERSCIEEWKTCENDCECCGMSTLCAASWVDGHQIKLCRNEGGKLKKVLHFIQKSVSKIKSCRK.

The first 20 residues, 1–20, serve as a signal peptide directing secretion; sequence MKLCAVIIASLLVCVAVASS. The disordered stretch occupies residues 20–55; the sequence is SSDNQKEFAQEKEMTREETQSLGEHEKDDEVTGSEE. A propeptide spanning residues 21-56 is cleaved from the precursor; it reads SDNQKEFAQEKEMTREETQSLGEHEKDDEVTGSEER. Basic and acidic residues predominate over residues 23–55; the sequence is NQKEFAQEKEMTREETQSLGEHEKDDEVTGSEE. Disulfide bonds link C58–C72, C65–C78, C69–C115, and C71–C91.

The protein belongs to the neurotoxin 03 (Tx2) family. 02 subfamily. HNTX-XV sub-subfamily. In terms of tissue distribution, expressed by the venom gland.

Its subcellular location is the secreted. Its function is as follows. Putative ion channel inhibitor. The protein is Hainantoxin-XV-5 of Cyriopagopus hainanus (Chinese bird spider).